The sequence spans 247 residues: Ice-binding protein (247 aa).

An N-terminal signal peptide occupies residues 1–19 (MTFSILSIFVFGLISSSVA). N-linked (GlcNAc...) asparagine glycosylation occurs at Asn219.

Belongs to the ice-binding protein family.

The protein resides in the secreted. In terms of biological role, binds ice crystals and most probably inhibits their growth in order to prevent cell damage from extracellular ice. The polypeptide is Ice-binding protein (Flammulina populicola (Enokitake mushroom)).